A 100-amino-acid chain; its full sequence is Urease subunit gamma (100 aa).

It belongs to the urease gamma subunit family. As to quaternary structure, heterotrimer of UreA (gamma), UreB (beta) and UreC (alpha) subunits. Three heterotrimers associate to form the active enzyme.

Its subcellular location is the cytoplasm. It catalyses the reaction urea + 2 H2O + H(+) = hydrogencarbonate + 2 NH4(+). The protein operates within nitrogen metabolism; urea degradation; CO(2) and NH(3) from urea (urease route): step 1/1. This is Urease subunit gamma from Ectopseudomonas mendocina (strain ymp) (Pseudomonas mendocina).